The following is a 621-amino-acid chain: DEAD-box ATP-dependent RNA helicase 39 (621 aa).

A Q motif motif is present at residues 112 to 140; the sequence is ENFQELGLSEEVMGALQELNIEVPTEIQC. Residues 143–330 enclose the Helicase ATP-binding domain; it reads IPAVMERKSV…DEEFQGIEHL (188 aa). Residue 156–163 participates in ATP binding; sequence SHTGSGKT. The DEAD box motif lies at 270–273; that stretch reads DEAD. Residues 355–505 form the Helicase C-terminal domain; sequence KLEALLQVLE…LESLTTDNVR (151 aa). Residues 497–621 are disordered; it reads ESLTTDNVRR…RGKSSSARAS (125 aa). The span at 503–537 shows a compositional bias: basic and acidic residues; that stretch reads NVRRDAARTHITQEKGRSVKQIREVSKQRNSRDKP. The span at 555–572 shows a compositional bias: low complexity; sequence KSSSSSFSKPRKASSPPE.

The protein belongs to the DEAD box helicase family.

The catalysed reaction is ATP + H2O = ADP + phosphate + H(+). This Arabidopsis thaliana (Mouse-ear cress) protein is DEAD-box ATP-dependent RNA helicase 39 (RH39).